The chain runs to 633 residues: Mitochondrial Rho GTPase 1 (633 aa).

One can recognise a Miro 1 domain in the interval Met1–His170. Residues Met1 to Lys603 lie on the Cytoplasmic side of the membrane. GTP contacts are provided by residues Gly10 to Ser17, Asp59 to Leu63, and Asn115 to Asp118. 2 consecutive EF-hand domains span residues Ala186–Lys221 and Glu306–Leu341. Residues Asp199, Asp201, Asp203, Tyr205, Glu210, Asp319, Asp321, Asp323, and Glu330 each contribute to the Ca(2+) site. A disordered region spans residues Asn398–Gly418. Residues Thr408–Gly418 are compositionally biased toward basic residues. The Miro 2 domain occupies Arg422 to Glu588. GTP is bound by residues Gly431–Ser438, Glu467–Gly471, and Leu537–Asp540. A helical; Anchor for type IV membrane protein transmembrane segment spans residues Trp604–Ile624. Topologically, residues Trp625 to Thr633 are mitochondrial intermembrane.

Belongs to the mitochondrial Rho GTPase family.

Its subcellular location is the mitochondrion outer membrane. Its function is as follows. Mitochondrial GTPase involved in mitochondrial trafficking. Probably involved in control of anterograde transport of mitochondria and their subcellular distribution. This chain is Mitochondrial Rho GTPase 1 (gem1), found in Aspergillus oryzae (strain ATCC 42149 / RIB 40) (Yellow koji mold).